The sequence spans 312 residues: Malate dehydrogenase (312 aa).

NAD(+) is bound by residues 12 to 17 and Asp-36; that span reads GSGFTG. The substrate site is built by Arg-87 and Arg-93. Residues Asn-100 and 123-125 contribute to the NAD(+) site; that span reads LTN. Asn-125 lines the substrate pocket. Ser-149 is modified (phosphoserine). Arg-156 is a binding site for substrate. The active-site Proton acceptor is His-180.

It belongs to the LDH/MDH superfamily. MDH type 3 family.

The enzyme catalyses (S)-malate + NAD(+) = oxaloacetate + NADH + H(+). Functionally, catalyzes the reversible oxidation of malate to oxaloacetate. This is Malate dehydrogenase from Oceanobacillus iheyensis (strain DSM 14371 / CIP 107618 / JCM 11309 / KCTC 3954 / HTE831).